The chain runs to 496 residues: tRNA-2-methylthio-N(6)-dimethylallyladenosine synthase (496 aa).

Residues 10–126 form the MTTase N-terminal domain; it reads RTYEVRTYGC…LPALLERARV (117 aa). [4Fe-4S] cluster contacts are provided by cysteine 19, cysteine 55, cysteine 89, cysteine 163, cysteine 167, and cysteine 170. The Radical SAM core domain maps to 149–380; it reads RESAYAAWVS…ALVNEIAWEE (232 aa). In terms of domain architecture, TRAM spans 382–451; that stretch reads KRLVGRRVEL…PHHLVADGPV (70 aa). The disordered stretch occupies residues 465–496; that stretch reads ARNAAPAPSSGVTLGMPTVGAPAPLPDAPACR. Residues 487–496 show a composition bias toward pro residues; it reads APLPDAPACR.

The protein belongs to the methylthiotransferase family. MiaB subfamily. Monomer. It depends on [4Fe-4S] cluster as a cofactor.

The protein resides in the cytoplasm. The catalysed reaction is N(6)-dimethylallyladenosine(37) in tRNA + (sulfur carrier)-SH + AH2 + 2 S-adenosyl-L-methionine = 2-methylsulfanyl-N(6)-dimethylallyladenosine(37) in tRNA + (sulfur carrier)-H + 5'-deoxyadenosine + L-methionine + A + S-adenosyl-L-homocysteine + 2 H(+). Catalyzes the methylthiolation of N6-(dimethylallyl)adenosine (i(6)A), leading to the formation of 2-methylthio-N6-(dimethylallyl)adenosine (ms(2)i(6)A) at position 37 in tRNAs that read codons beginning with uridine. The polypeptide is tRNA-2-methylthio-N(6)-dimethylallyladenosine synthase (Nocardioides sp. (strain ATCC BAA-499 / JS614)).